Here is a 61-residue protein sequence, read N- to C-terminus: Copper metallothionein 1-1 (61 aa).

The propeptide occupies 1 to 8 (MFSELINF). The Cu cation site is built by Cys15, Cys17, Cys19, Cys22, and Cys28. Lys30 participates in a covalent cross-link: Glycyl lysine isopeptide (Lys-Gly) (interchain with G-Cter in ubiquitin). 5 residues coordinate Cu cation: Cys32, Cys34, Cys38, Cys44, and Cys46. A disordered region spans residues 37 to 61 (GCNSDDKCPCGNKSEETKKSCCSGK). Basic and acidic residues predominate over residues 40-55 (SDDKCPCGNKSEETKK).

The protein belongs to the metallothionein superfamily. Type 12 family.

Its function is as follows. Protects the cell against copper toxicity by tightly chelating copper ions. May also act as a depository for copper designated for the effective transfer into the apo forms of copper proteins. This Saccharomyces cerevisiae (strain ATCC 204508 / S288c) (Baker's yeast) protein is Copper metallothionein 1-1 (CUP1-1).